Reading from the N-terminus, the 66-residue chain is Large ribosomal subunit protein bL35 (66 aa).

Residues 1–16 are compositionally biased toward basic residues; sequence MPKMKTHKGSAKRFKK. Positions 1–24 are disordered; it reads MPKMKTHKGSAKRFKKTGTGQLKR.

It belongs to the bacterial ribosomal protein bL35 family.

This Anoxybacillus flavithermus (strain DSM 21510 / WK1) protein is Large ribosomal subunit protein bL35.